Consider the following 284-residue polypeptide: 4-diphosphocytidyl-2-C-methyl-D-erythritol kinase (284 aa).

K13 is an active-site residue. P96–S106 lines the ATP pocket. The active site involves D138.

It belongs to the GHMP kinase family. IspE subfamily.

It catalyses the reaction 4-CDP-2-C-methyl-D-erythritol + ATP = 4-CDP-2-C-methyl-D-erythritol 2-phosphate + ADP + H(+). It participates in isoprenoid biosynthesis; isopentenyl diphosphate biosynthesis via DXP pathway; isopentenyl diphosphate from 1-deoxy-D-xylulose 5-phosphate: step 3/6. Its function is as follows. Catalyzes the phosphorylation of the position 2 hydroxy group of 4-diphosphocytidyl-2C-methyl-D-erythritol. The sequence is that of 4-diphosphocytidyl-2-C-methyl-D-erythritol kinase from Chromobacterium violaceum (strain ATCC 12472 / DSM 30191 / JCM 1249 / CCUG 213 / NBRC 12614 / NCIMB 9131 / NCTC 9757 / MK).